We begin with the raw amino-acid sequence, 318 residues long: L-lactate dehydrogenase (318 aa).

Residues valine 18, aspartate 39, lysine 44, tyrosine 69, and 83–84 (GA) each bind NAD(+). Positions 86 and 92 each coordinate substrate. Residues serine 105, 122–124 (VSN), and serine 147 contribute to the NAD(+) site. 124–127 (NPVD) lines the substrate pocket. 152–155 (DTSR) provides a ligand contact to substrate. The Proton acceptor role is filled by histidine 179. Tyrosine 225 bears the Phosphotyrosine mark. Threonine 234 provides a ligand contact to substrate.

Belongs to the LDH/MDH superfamily. LDH family. Homotetramer.

Its subcellular location is the cytoplasm. The catalysed reaction is (S)-lactate + NAD(+) = pyruvate + NADH + H(+). It functions in the pathway fermentation; pyruvate fermentation to lactate; (S)-lactate from pyruvate: step 1/1. Catalyzes the conversion of lactate to pyruvate. This is L-lactate dehydrogenase from Clostridium botulinum (strain ATCC 19397 / Type A).